The primary structure comprises 180 residues: uncharacterized protein (180 aa).

The N-acetyltransferase domain maps to 31 to 180 (LLVRTAEWLR…HLFEKEITAE (150 aa)).

This sequence belongs to the acetyltransferase family.

This is an uncharacterized protein from Bacillus subtilis (strain 168).